Consider the following 174-residue polypeptide: ATP-dependent protease subunit HslV (174 aa).

T2 is a catalytic residue. Positions 157, 160, and 163 each coordinate Na(+).

This sequence belongs to the peptidase T1B family. HslV subfamily. In terms of assembly, a double ring-shaped homohexamer of HslV is capped on each side by a ring-shaped HslU homohexamer. The assembly of the HslU/HslV complex is dependent on binding of ATP.

The protein resides in the cytoplasm. The catalysed reaction is ATP-dependent cleavage of peptide bonds with broad specificity.. With respect to regulation, allosterically activated by HslU binding. Its function is as follows. Protease subunit of a proteasome-like degradation complex believed to be a general protein degrading machinery. The protein is ATP-dependent protease subunit HslV of Shewanella loihica (strain ATCC BAA-1088 / PV-4).